Reading from the N-terminus, the 1060-residue chain is RNA-binding protein 27 (1060 aa).

Basic and acidic residues-rich tracts occupy residues 91–102 (LVQEKEEIKEEV) and 124–143 (TRSESSERRTREKKREDGKW). Disordered regions lie at residues 91–143 (LVQE…DGKW) and 162–235 (WRRG…GAQS). The span at 165–185 (GRSKSRSKSRGLSRSRSRSRG) shows a compositional bias: basic residues. The span at 186–211 (RSKDRDPNRNVEHRERSKFKSERNDL) shows a compositional bias: basic and acidic residues. Over residues 225–235 (SSEQYSSGAQS) the composition is skewed to polar residues. A C3H1-type zinc finger spans residues 273–301 (LPPKRRCRDYDERGFCVLGDLCQFDHGND). 2 stretches are compositionally biased toward pro residues: residues 319 to 356 (PPPGLPPPPPPGMLMPPMPGPGPGPGPGPGPGPGPGPG) and 371 to 384 (QPPPSVVLPIPRPP). A disordered region spans residues 319–412 (PPPGLPPPPP…PNLASVGTRL (94 aa)). Polar residues predominate over residues 386–402 (TQSSLINSRDQPGTSAV). At Thr-447 the chain carries Phosphothreonine. At Arg-455 the chain carries Omega-N-methylarginine. Residues 565–592 (MSGLEGPLTKKPWLGKQGNNNQNKPGFL) are disordered. Low complexity predominate over residues 579–588 (GKQGNNNQNK). Residues 600 to 674 (TKLEVKKIPQ…RFIRVLWHRE (75 aa)) form the RRM domain. Residues 809–886 (VQEVLKKKQE…KDELKTSSAV (78 aa)) are a coiled coil. A Phosphoserine modification is found at Ser-927. Disordered regions lie at residues 940-968 (PVGRGKTMSSQGRGRGRGRGGRGRGSLNH) and 1006-1060 (DRRL…SWRR). A phosphoserine mark is found at Ser-1012 and Ser-1020. Over residues 1024–1053 (ETEEEEVKEEETETSDLFLPDDDDEDEDEY) the composition is skewed to acidic residues.

Its subcellular location is the cytoplasm. It is found in the nucleus speckle. May be involved in the turnover of nuclear polyadenylated (pA+) RNA. This chain is RNA-binding protein 27, found in Homo sapiens (Human).